Here is a 286-residue protein sequence, read N- to C-terminus: Phosphatidylserine decarboxylase proenzyme (286 aa).

Active-site charge relay system; for autoendoproteolytic cleavage activity residues include D90, H147, and S252. S252 acts as the Schiff-base intermediate with substrate; via pyruvic acid; for decarboxylase activity in catalysis. A Pyruvic acid (Ser); by autocatalysis modification is found at S252.

Belongs to the phosphatidylserine decarboxylase family. PSD-B subfamily. Prokaryotic type I sub-subfamily. Heterodimer of a large membrane-associated beta subunit and a small pyruvoyl-containing alpha subunit. Pyruvate serves as cofactor. Post-translationally, is synthesized initially as an inactive proenzyme. Formation of the active enzyme involves a self-maturation process in which the active site pyruvoyl group is generated from an internal serine residue via an autocatalytic post-translational modification. Two non-identical subunits are generated from the proenzyme in this reaction, and the pyruvate is formed at the N-terminus of the alpha chain, which is derived from the carboxyl end of the proenzyme. The autoendoproteolytic cleavage occurs by a canonical serine protease mechanism, in which the side chain hydroxyl group of the serine supplies its oxygen atom to form the C-terminus of the beta chain, while the remainder of the serine residue undergoes an oxidative deamination to produce ammonia and the pyruvoyl prosthetic group on the alpha chain. During this reaction, the Ser that is part of the protease active site of the proenzyme becomes the pyruvoyl prosthetic group, which constitutes an essential element of the active site of the mature decarboxylase.

It localises to the cell membrane. It carries out the reaction a 1,2-diacyl-sn-glycero-3-phospho-L-serine + H(+) = a 1,2-diacyl-sn-glycero-3-phosphoethanolamine + CO2. Its pathway is phospholipid metabolism; phosphatidylethanolamine biosynthesis; phosphatidylethanolamine from CDP-diacylglycerol: step 2/2. In terms of biological role, catalyzes the formation of phosphatidylethanolamine (PtdEtn) from phosphatidylserine (PtdSer). The sequence is that of Phosphatidylserine decarboxylase proenzyme from Ectopseudomonas mendocina (strain ymp) (Pseudomonas mendocina).